The following is a 277-amino-acid chain: tRNA pseudouridine synthase A (277 aa).

Residue aspartate 51 is the Nucleophile of the active site. Position 109 (tyrosine 109) interacts with substrate.

It belongs to the tRNA pseudouridine synthase TruA family. In terms of assembly, homodimer.

It catalyses the reaction uridine(38/39/40) in tRNA = pseudouridine(38/39/40) in tRNA. Functionally, formation of pseudouridine at positions 38, 39 and 40 in the anticodon stem and loop of transfer RNAs. The sequence is that of tRNA pseudouridine synthase A from Nitrosomonas eutropha (strain DSM 101675 / C91 / Nm57).